The following is a 394-amino-acid chain: NAD(P)H-quinone oxidoreductase subunit H (394 aa).

Belongs to the complex I 49 kDa subunit family. As to quaternary structure, NDH-1 can be composed of about 15 different subunits; different subcomplexes with different compositions have been identified which probably have different functions.

Its subcellular location is the cellular thylakoid membrane. The enzyme catalyses a plastoquinone + NADH + (n+1) H(+)(in) = a plastoquinol + NAD(+) + n H(+)(out). It carries out the reaction a plastoquinone + NADPH + (n+1) H(+)(in) = a plastoquinol + NADP(+) + n H(+)(out). Functionally, NDH-1 shuttles electrons from an unknown electron donor, via FMN and iron-sulfur (Fe-S) centers, to quinones in the respiratory and/or the photosynthetic chain. The immediate electron acceptor for the enzyme in this species is believed to be plastoquinone. Couples the redox reaction to proton translocation, and thus conserves the redox energy in a proton gradient. Cyanobacterial NDH-1 also plays a role in inorganic carbon-concentration. This is NAD(P)H-quinone oxidoreductase subunit H from Synechococcus sp. (strain ATCC 27144 / PCC 6301 / SAUG 1402/1) (Anacystis nidulans).